The primary structure comprises 198 residues: MICOS complex subunit MIC26 (198 aa).

A signal peptide spans 1 to 25; that stretch reads MFKVIHRYVGPASLSLLTFKVYASS. The helical transmembrane segment at 108–128 threads the bilayer; sequence PGFFPRLGVIGFAGVVGLVLA. Ser-162 is a glycosylation site (O-linked (Xyl...) (chondroitin sulfate) serine).

The protein belongs to the apolipoprotein O/MICOS complex subunit Mic27 family. As to quaternary structure, component of the mitochondrial contact site and cristae organizing system (MICOS) complex, composed of at least MICOS10/MIC10, CHCHD3/MIC19, CHCHD6/MIC25, APOOL/MIC27, IMMT/MIC60, APOO/MIC23/MIC26 and MICOS13/MIC13. This complex was also known under the names MINOS or MitOS complex. The MICOS complex associates with mitochondrial outer membrane proteins SAMM50, MTX1 and MTX2 (together described as components of the mitochondrial outer membrane sorting assembly machinery (SAM) complex) and DNAJC11, mitochondrial inner membrane protein TMEM11 and with HSPA9. The MICOS and SAM complexes together with DNAJC11 are part of a large protein complex spanning both membranes termed the mitochondrial intermembrane space bridging (MIB) complex. Interacts with IMMT/MIC60. Interacts with MICOS10/MIC10 and APOOL/MIC27. Post-translationally, O-glycosylation; glycosaminoglycan of chondroitin-sulfate type.

The protein localises to the mitochondrion inner membrane. It localises to the secreted. The protein resides in the mitochondrion. Its subcellular location is the endoplasmic reticulum membrane. It is found in the golgi apparatus membrane. Functionally, component of the MICOS complex, a large protein complex of the mitochondrial inner membrane that plays crucial roles in the maintenance of crista junctions, inner membrane architecture, and formation of contact sites to the outer membrane. Plays a crucial role in crista junction formation and mitochondrial function. Can induce cardiac lipotoxicity by enhancing mitochondrial respiration and fatty acid metabolism in cardiac myoblasts. Promotes cholesterol efflux from macrophage cells. Detected in HDL, LDL and VLDL. Secreted by a microsomal triglyceride transfer protein (MTTP)-dependent mechanism, probably as a VLDL-associated protein that is subsequently transferred to HDL. The polypeptide is MICOS complex subunit MIC26 (APOO) (Bos taurus (Bovine)).